A 178-amino-acid chain; its full sequence is Large ribosomal subunit protein uL6 (178 aa).

The protein belongs to the universal ribosomal protein uL6 family. In terms of assembly, part of the 50S ribosomal subunit.

Functionally, this protein binds to the 23S rRNA, and is important in its secondary structure. It is located near the subunit interface in the base of the L7/L12 stalk, and near the tRNA binding site of the peptidyltransferase center. The protein is Large ribosomal subunit protein uL6 of Bacillus licheniformis (strain ATCC 14580 / DSM 13 / JCM 2505 / CCUG 7422 / NBRC 12200 / NCIMB 9375 / NCTC 10341 / NRRL NRS-1264 / Gibson 46).